The primary structure comprises 465 residues: MSALKKRKITEKQPETNSDSEAESVSSRGSAKDETQTSGEEPAPAKSFKELGIIDQLCEACENMGYKAPTPIQSQAIPLALEGRDVIGLAETGSGKTAAFALPMLQALMEAPQTLFGLVLAPTRELAYQISQAFETLGSTIGVRCAVIVGGMDMVAQSIALGKKPHIIVATPGRLLDHLENTKGFSLRNLKYLAIDEADRLLDMDFGESLDKIIRILPRTRHTYLFSATMSTKVESLQRASLSNPVRVSVSSKYQTVSTLQSSYICIPHKHKNLYLVYLLNEFAGQSAIIFTTTVHETQRVAFMLRALGFGAIPLHGQLSQSARLGALGKFRSRSRDILVATDVAARGLDIPSVDVVFNFDLPMDSKTYIHRVGRTARAGKSGVAISFVTQYDVEVWLRIEHALSKKLPEYQVEKDEVMVMSERVAEASRQATIEMKSFDEKKGARGKKFGKGKRSRDDMDQEEG.

Residues 1–46 (MSALKKRKITEKQPETNSDSEAESVSSRGSAKDETQTSGEEPAPAK) are disordered. The segment covering 15–29 (ETNSDSEAESVSSRG) has biased composition (polar residues). The Q motif signature appears at 46-74 (KSFKELGIIDQLCEACENMGYKAPTPIQS). Residues 77–248 (IPLALEGRDV…RASLSNPVRV (172 aa)) form the Helicase ATP-binding domain. 90-97 (AETGSGKT) is an ATP binding site. A DEAD box motif is present at residues 196–199 (DEAD). A Helicase C-terminal domain is found at 275-419 (YLVYLLNEFA…EYQVEKDEVM (145 aa)). The disordered stretch occupies residues 436–465 (MKSFDEKKGARGKKFGKGKRSRDDMDQEEG). Residues 445-455 (ARGKKFGKGKR) show a composition bias toward basic residues.

The protein belongs to the DEAD box helicase family. DDX47/RRP3 subfamily. As to quaternary structure, interacts with the SSU processome.

It localises to the nucleus. The enzyme catalyses ATP + H2O = ADP + phosphate + H(+). Its function is as follows. ATP-dependent rRNA helicase required for pre-ribosomal RNA processing. Involved in the maturation of the 35S-pre-rRNA and to its cleavage to mature 18S rRNA. This chain is ATP-dependent rRNA helicase rrp3, found in Emericella nidulans (strain FGSC A4 / ATCC 38163 / CBS 112.46 / NRRL 194 / M139) (Aspergillus nidulans).